The chain runs to 323 residues: Fructose-1,6-bisphosphatase class 1 (323 aa).

The Mg(2+) site is built by glutamate 88, aspartate 107, leucine 109, and aspartate 110. Residues 110 to 113 and asparagine 200 each bind substrate; that span reads DGSS. Glutamate 272 contacts Mg(2+).

Belongs to the FBPase class 1 family. As to quaternary structure, homotetramer. Requires Mg(2+) as cofactor.

It is found in the cytoplasm. It carries out the reaction beta-D-fructose 1,6-bisphosphate + H2O = beta-D-fructose 6-phosphate + phosphate. The protein operates within carbohydrate biosynthesis; gluconeogenesis. This chain is Fructose-1,6-bisphosphatase class 1, found in Acinetobacter baumannii (strain AYE).